Here is a 320-residue protein sequence, read N- to C-terminus: Acyl-coenzyme A thioesterase 8 (320 aa).

Catalysis depends on charge relay system residues aspartate 233, serine 255, and glutamine 305. The short motif at 318–320 is the Microbody targeting signal element; it reads SKL.

Belongs to the C/M/P thioester hydrolase family. In terms of assembly, homodimer.

It localises to the peroxisome matrix. It carries out the reaction choloyl-CoA + H2O = cholate + CoA + H(+). The catalysed reaction is chenodeoxycholoyl-CoA + H2O = chenodeoxycholate + CoA + H(+). The enzyme catalyses acetyl-CoA + H2O = acetate + CoA + H(+). It catalyses the reaction butanoyl-CoA + H2O = butanoate + CoA + H(+). It carries out the reaction hexanoyl-CoA + H2O = hexanoate + CoA + H(+). The catalysed reaction is octanoyl-CoA + H2O = octanoate + CoA + H(+). The enzyme catalyses decanoyl-CoA + H2O = decanoate + CoA + H(+). It catalyses the reaction dodecanoyl-CoA + H2O = dodecanoate + CoA + H(+). It carries out the reaction tetradecanoyl-CoA + H2O = tetradecanoate + CoA + H(+). The catalysed reaction is 4,8-dimethylnonanoyl-CoA + H2O = 4,8-dimethylnonanoate + CoA + H(+). The enzyme catalyses 2,6-dimethylheptanoyl-CoA + H2O = 2,6-dimethylheptanoate + CoA + H(+). It catalyses the reaction malonyl-CoA + H2O = malonate + CoA + H(+). It carries out the reaction acetoacetyl-CoA + H2O = acetoacetate + CoA + H(+). The catalysed reaction is propanoyl-CoA + H2O = propanoate + CoA + H(+). The enzyme catalyses succinyl-CoA + H2O = succinate + CoA + H(+). It catalyses the reaction glutaryl-CoA + H2O = glutarate + CoA + H(+). It carries out the reaction hexanedioyl-CoA + H2O = hexanedioate + CoA + H(+). The catalysed reaction is octanedioyl-CoA + H2O = octanedioate + CoA + H(+). The enzyme catalyses decanedioyl-CoA + H2O = decanedioate + CoA + H(+). It catalyses the reaction dodecanedioyl-CoA + H2O = dodecanedioate + CoA + H(+). It carries out the reaction (9Z)-tetradecenoyl-CoA + H2O = (9Z)-tetradecenoate + CoA + H(+). The catalysed reaction is hexadecanoyl-CoA + H2O = hexadecanoate + CoA + H(+). The enzyme catalyses (9Z)-hexadecenoyl-CoA + H2O = (9Z)-hexadecenoate + CoA + H(+). It catalyses the reaction octadecanoyl-CoA + H2O = octadecanoate + CoA + H(+). It carries out the reaction (9Z)-octadecenoyl-CoA + H2O = (9Z)-octadecenoate + CoA + H(+). The catalysed reaction is (9Z,12Z)-octadecadienoyl-CoA + H2O = (9Z,12Z)-octadecadienoate + CoA + H(+). The enzyme catalyses eicosanoyl-CoA + H2O = eicosanoate + CoA + H(+). It catalyses the reaction (5Z,8Z,11Z,14Z)-eicosatetraenoyl-CoA + H2O = (5Z,8Z,11Z,14Z)-eicosatetraenoate + CoA + H(+). It carries out the reaction (3S)-3-hydroxy-3-methylglutaryl-CoA + H2O = 3-hydroxy-3-methylglutarate + CoA + H(+). The catalysed reaction is 3alpha,7alpha,12alpha-trihydroxy-5beta-cholestan-26-oyl-CoA + H2O = 3alpha,7alpha,12alpha-trihydroxy-5beta-cholestan-26-oate + CoA + H(+). The enzyme catalyses 2-methyloctadecanoyl-CoA + H2O = 2-methyloctadecanoate + CoA + H(+). It catalyses the reaction prostaglandin F2alpha-CoA + H2O = prostaglandin F2alpha + CoA + H(+). With respect to regulation, inhibited by CoASH (IC(50)=10-15 uM). Also inhibited by cysteine-reactive agents. Functionally, catalyzes the hydrolysis of acyl-CoAs into free fatty acids and coenzyme A (CoASH), regulating their respective intracellular levels. Displays no strong substrate specificity with respect to the carboxylic acid moiety of Acyl-CoAs. Hydrolyzes medium length (C2 to C20) straight-chain, saturated and unsaturated acyl-CoAS but is inactive towards substrates with longer aliphatic chains. Moreover, it catalyzes the hydrolysis of CoA esters of bile acids, such as choloyl-CoA and chenodeoxycholoyl-CoA and competes with bile acid CoA:amino acid N-acyltransferase (BAAT). Is also able to hydrolyze CoA esters of dicarboxylic acids. It is involved in the metabolic regulation of peroxisome proliferation. The polypeptide is Acyl-coenzyme A thioesterase 8 (Acot8) (Rattus norvegicus (Rat)).